We begin with the raw amino-acid sequence, 176 residues long: Endoribonuclease YbeY (176 aa).

Residues H139, H143, and H149 each contribute to the Zn(2+) site.

This sequence belongs to the endoribonuclease YbeY family. It depends on Zn(2+) as a cofactor.

Its subcellular location is the cytoplasm. In terms of biological role, single strand-specific metallo-endoribonuclease involved in late-stage 70S ribosome quality control and in maturation of the 3' terminus of the 16S rRNA. The chain is Endoribonuclease YbeY from Acaryochloris marina (strain MBIC 11017).